A 243-amino-acid chain; its full sequence is Interleukin-27 subunit alpha (243 aa).

An N-terminal signal peptide occupies residues 1-28; the sequence is MGQTAGDLGWRLSLLLLPLLLVQAGVWG.

Belongs to the IL-6 superfamily. As to quaternary structure, heterodimer with EBI3; not disulfide-linked. This heterodimer is known as interleukin IL-27. O-glycosylated. In terms of tissue distribution, expressed in monocytes and in placenta.

It is found in the secreted. Associates with EBI3 to form the IL-27 interleukin, a heterodimeric cytokine which functions in innate immunity. IL-27 has pro- and anti-inflammatory properties, that can regulate T-helper cell development, suppress T-cell proliferation, stimulate cytotoxic T-cell activity, induce isotype switching in B-cells, and that has diverse effects on innate immune cells. Among its target cells are CD4 T-helper cells which can differentiate in type 1 effector cells (TH1), type 2 effector cells (TH2) and IL17 producing helper T-cells (TH17). It drives rapid clonal expansion of naive but not memory CD4 T-cells. It also strongly synergizes with IL-12 to trigger interferon-gamma/IFN-gamma production of naive CD4 T-cells, binds to the cytokine receptor WSX-1/TCCR which appears to be required but not sufficient for IL-27-mediated signal transduction. IL-27 potentiate the early phase of TH1 response and suppress TH2 and TH17 differentiation. It induces the differentiation of TH1 cells via two distinct pathways, p38 MAPK/TBX21- and ICAM1/ITGAL/ERK-dependent pathways. It also induces STAT1, STAT3, STAT4 and STAT5 phosphorylation and activates TBX21/T-Bet via STAT1 with resulting IL12RB2 up-regulation, an event crucial to TH1 cell commitment. It suppresses the expression of GATA3, the inhibitor TH1 cells development. In CD8 T-cells, it activates STATs as well as GZMB. IL-27 reveals to be a potent inhibitor of TH17 cell development and of IL-17 production. Indeed IL27 alone is also able to inhibit the production of IL17 by CD4 and CD8 T-cells. While IL-27 suppressed the development of pro-inflammatory Th17 cells via STAT1, it inhibits the development of anti-inflammatory inducible regulatory T-cells, iTreg, independently of STAT1. IL-27 also has an effect on cytokine production, it suppresses pro-inflammatory cytokine production such as IL2, IL4, IL5 and IL6 and activates suppressors of cytokine signaling such as SOCS1 and SOCS3. Apart from suppression of cytokine production, IL-27 also antagonizes the effects of some cytokines such as IL6 through direct effects on T-cells. Another important role of IL-27 is its antitumor activity as well as its antiangiogenic activity with activation of production of antiangiogenic chemokines such as IP-10/CXCL10 and MIG/CXCL9. In vein endothelial cells, it induces IRF1/interferon regulatory factor 1 and increase the expression of MHC class II transactivator/CIITA with resulting up-regulation of major histocompatibility complex class II. IL-27 also demonstrates antiviral activity with inhibitory properties on HIV-1 replication. The polypeptide is Interleukin-27 subunit alpha (IL27) (Homo sapiens (Human)).